The primary structure comprises 460 residues: Argininosuccinate lyase (460 aa).

This sequence belongs to the lyase 1 family. Argininosuccinate lyase subfamily.

It localises to the cytoplasm. It carries out the reaction 2-(N(omega)-L-arginino)succinate = fumarate + L-arginine. It functions in the pathway amino-acid biosynthesis; L-arginine biosynthesis; L-arginine from L-ornithine and carbamoyl phosphate: step 3/3. This is Argininosuccinate lyase from Edwardsiella ictaluri (strain 93-146).